A 156-amino-acid polypeptide reads, in one-letter code: Small ribosomal subunit protein uS7 (156 aa).

Belongs to the universal ribosomal protein uS7 family. In terms of assembly, part of the 30S ribosomal subunit. Contacts proteins S9 and S11.

In terms of biological role, one of the primary rRNA binding proteins, it binds directly to 16S rRNA where it nucleates assembly of the head domain of the 30S subunit. Is located at the subunit interface close to the decoding center, probably blocks exit of the E-site tRNA. This Clostridium acetobutylicum (strain ATCC 824 / DSM 792 / JCM 1419 / IAM 19013 / LMG 5710 / NBRC 13948 / NRRL B-527 / VKM B-1787 / 2291 / W) protein is Small ribosomal subunit protein uS7.